The chain runs to 131 residues: Protein FAM107B (131 aa).

Ala2 carries the N-acetylalanine modification. The tract at residues 39 to 79 (MNQKRGLAPQNKPELQKVMEKRRRDQVIKQKEEEAQKKKSD) is disordered. Lys50 carries the N6-acetyllysine modification. Basic and acidic residues predominate over residues 52 to 79 (ELQKVMEKRRRDQVIKQKEEEAQKKKSD). The stretch at 61–112 (RRDQVIKQKEEEAQKKKSDLEIELLKRQQKLEQLELEKQKLQEEQENAPEFV) forms a coiled coil.

This sequence belongs to the FAM107 family. Expressed in the hippocampus and hypothalamus. Expressed in the pontine nuclei and reticulotegmental nucleus. Expressed in Purkinje cell and nuclear layers of the cerebelum. Expressed in the choroid plexus. Expressed in hippocampal granule neurons of the dente gyrus.

This Mus musculus (Mouse) protein is Protein FAM107B.